The primary structure comprises 308 residues: Elongation factor Ts (308 aa).

Residues 80–83 (TDFV) are involved in Mg(2+) ion dislocation from EF-Tu.

The protein belongs to the EF-Ts family.

Its subcellular location is the cytoplasm. Functionally, associates with the EF-Tu.GDP complex and induces the exchange of GDP to GTP. It remains bound to the aminoacyl-tRNA.EF-Tu.GTP complex up to the GTP hydrolysis stage on the ribosome. This is Elongation factor Ts from Rhodopseudomonas palustris (strain ATCC BAA-98 / CGA009).